We begin with the raw amino-acid sequence, 503 residues long: ATP synthase subunit beta (503 aa).

157 to 164 lines the ATP pocket; it reads GGAGVGKT.

It belongs to the ATPase alpha/beta chains family. As to quaternary structure, F-type ATPases have 2 components, CF(1) - the catalytic core - and CF(0) - the membrane proton channel. CF(1) has five subunits: alpha(3), beta(3), gamma(1), delta(1), epsilon(1). CF(0) has three main subunits: a(1), b(2) and c(9-12). The alpha and beta chains form an alternating ring which encloses part of the gamma chain. CF(1) is attached to CF(0) by a central stalk formed by the gamma and epsilon chains, while a peripheral stalk is formed by the delta and b chains.

The protein localises to the cell inner membrane. The catalysed reaction is ATP + H2O + 4 H(+)(in) = ADP + phosphate + 5 H(+)(out). Produces ATP from ADP in the presence of a proton gradient across the membrane. The catalytic sites are hosted primarily by the beta subunits. This is ATP synthase subunit beta from Flavobacterium psychrophilum (strain ATCC 49511 / DSM 21280 / CIP 103535 / JIP02/86).